An 844-amino-acid polypeptide reads, in one-letter code: DNA mismatch repair protein MutS (844 aa).

602 to 609 is an ATP binding site; sequence GPNMSGKS.

The protein belongs to the DNA mismatch repair MutS family.

In terms of biological role, this protein is involved in the repair of mismatches in DNA. It is possible that it carries out the mismatch recognition step. This protein has a weak ATPase activity. The protein is DNA mismatch repair protein MutS of Streptococcus pneumoniae (strain Hungary19A-6).